Consider the following 376-residue polypeptide: Chaperone protein DnaJ (376 aa).

One can recognise a J domain in the interval 5 to 70 (DYYEVLGVGR…DKKAAYDQFG (66 aa)). The segment at 132–210 (GLTKELRIPT…CHGEGRVEKS (79 aa)) adopts a CR-type zinc-finger fold. The Zn(2+) site is built by Cys145, Cys148, Cys162, Cys165, Cys184, Cys187, Cys198, and Cys201. 4 CXXCXGXG motif repeats span residues 145–152 (CDLCDGSG), 162–169 (CGTCHGQG), 184–191 (CPTCHGRG), and 198–205 (CGKCHGEG).

This sequence belongs to the DnaJ family. Homodimer. Zn(2+) is required as a cofactor.

The protein localises to the cytoplasm. Participates actively in the response to hyperosmotic and heat shock by preventing the aggregation of stress-denatured proteins and by disaggregating proteins, also in an autonomous, DnaK-independent fashion. Unfolded proteins bind initially to DnaJ; upon interaction with the DnaJ-bound protein, DnaK hydrolyzes its bound ATP, resulting in the formation of a stable complex. GrpE releases ADP from DnaK; ATP binding to DnaK triggers the release of the substrate protein, thus completing the reaction cycle. Several rounds of ATP-dependent interactions between DnaJ, DnaK and GrpE are required for fully efficient folding. Also involved, together with DnaK and GrpE, in the DNA replication of plasmids through activation of initiation proteins. In Shewanella loihica (strain ATCC BAA-1088 / PV-4), this protein is Chaperone protein DnaJ.